The chain runs to 881 residues: Alanine--tRNA ligase (881 aa).

Histidine 563, histidine 567, cysteine 672, and histidine 676 together coordinate Zn(2+).

The protein belongs to the class-II aminoacyl-tRNA synthetase family. Requires Zn(2+) as cofactor.

It localises to the cytoplasm. It carries out the reaction tRNA(Ala) + L-alanine + ATP = L-alanyl-tRNA(Ala) + AMP + diphosphate. In terms of biological role, catalyzes the attachment of alanine to tRNA(Ala) in a two-step reaction: alanine is first activated by ATP to form Ala-AMP and then transferred to the acceptor end of tRNA(Ala). Also edits incorrectly charged Ser-tRNA(Ala) and Gly-tRNA(Ala) via its editing domain. This chain is Alanine--tRNA ligase, found in Azorhizobium caulinodans (strain ATCC 43989 / DSM 5975 / JCM 20966 / LMG 6465 / NBRC 14845 / NCIMB 13405 / ORS 571).